The sequence spans 108 residues: uncharacterized protein (108 aa).

A helical transmembrane segment spans residues 7 to 27; it reads FIPMLLVANAAPYFFYPIFML.

To N.crassa NCU05373.1.

The protein localises to the membrane. This is an uncharacterized protein from Schizosaccharomyces pombe (strain 972 / ATCC 24843) (Fission yeast).